The sequence spans 250 residues: Precorrin-4 C(11)-methyltransferase (250 aa).

Belongs to the precorrin methyltransferase family.

The catalysed reaction is precorrin-4 + S-adenosyl-L-methionine = precorrin-5 + S-adenosyl-L-homocysteine. It functions in the pathway cofactor biosynthesis; adenosylcobalamin biosynthesis; cob(II)yrinate a,c-diamide from precorrin-2 (aerobic route): step 4/10. Catalyzes the methylation of C-11 in precorrin-4 to form precorrin-5. This is Precorrin-4 C(11)-methyltransferase (cobM) from Pseudomonas aeruginosa (strain ATCC 15692 / DSM 22644 / CIP 104116 / JCM 14847 / LMG 12228 / 1C / PRS 101 / PAO1).